Reading from the N-terminus, the 299-residue chain is N-acetylaspartate synthetase (299 aa).

Over residues 44–57 (AAPGPAAAPPPAAG) the composition is skewed to pro residues. The segment at 44 to 70 (AAPGPAAAPPPAAGPQPHGGTGGAGPP) is disordered. Residues 60 to 70 (PHGGTGGAGPP) show a composition bias toward gly residues. A helical transmembrane segment spans residues 118-138 (YALLAALCFAVTRSLLLTCLV). Positions 143–280 (LALRYYYSRK…VLPGMTLSLA (138 aa)) constitute an N-acetyltransferase domain.

The protein belongs to the NAT8 family. Expressed in brain, kidney, liver and spleen. In brain, present in neurons but not in astrocytes (at protein level). Expressed in brain, thymus and spleen.

The protein resides in the cytoplasm. It localises to the microsome membrane. It is found in the mitochondrion membrane. Its subcellular location is the endoplasmic reticulum membrane. It catalyses the reaction L-aspartate + acetyl-CoA = N-acetyl-L-aspartate + CoA + H(+). With respect to regulation, aminooxyacetic acid (AOAA) blocks its activity in both cytoplasm and mitochondria. Catalyzes the synthesis of N-acetylaspartate acid (NAA) from L-aspartate and acetyl-CoA. Promotes dopamine uptake by regulating TNF-alpha expression. Attenuates methamphetamine-induced inhibition of dopamine uptake. This Mus musculus (Mouse) protein is N-acetylaspartate synthetase (Nat8l).